A 746-amino-acid chain; its full sequence is MEHTYQYSWIIPFIPLPVPILLGVGLLLFPTATKNLRRMWTFLSIFLLSIVMIFALYLSIQQIILSCIHQNVWSWTINNEFSFEFGYFIDPLTSIMSILITTVGILVLIYSDNYMSHDQGYLRFFAYMGFFNTSMLGLVTSSNLIQVYFFWELVGMCSYLLIGFWFTRPIAANACQKAFVTNRVGDFGLLLGILGLYWITGSFEFQDLFEIFNNLILNNRVNFLFLTLCAFLLFVGPIAKSAQFPLHVWLPDAMEGPTPISALIHAATMVAAGIFLVARLLPLFIVIPSIMYIISLIGIITVLLGATLALAQKDIKRGLAYSTMSQLGYMMLALGMGSYRSALFHLITHAYSKALLFLGSGSIIHSMEAIVGYSPDKSQNMILMGGLTKHVPITKTAFLVGTLSLCGIPPLACFWSKDEILNDSLLFSPIFAIIACSTAGLTAFYMFRIYLLTFEGHLNTYFINYSGKKSSSFYSISLWGKEEEKKLNRNFGLVPLLTMNNTKRASFFYKKTYKISNNVRNQTFITVENFGLNTRTFYYPQESDNTILFPMLVLLLFTLFIGAIGIPFNQEGIDFDILSKLFTPSINLLHKNSQSFVDWYEFLRNATFSVSIAFFGIFIAYCLYKPFYSSLLNLTLLNSFQKWNSKRIRWEKLINFVYNWSYNRGYIDAFFKTSLIESIRRLAKLTNFFDKRIIDGITNGVGITSFFVGEVTKYIGGSRVSSYLFLYLSYVLIFLTILFFFYFEKF.

Helical transmembrane passes span 9-29, 40-60, 89-109, 125-145, 147-167, 185-205, 221-241, 258-278, 280-300, 327-347, 354-374, 396-416, 425-445, 547-567, 608-628, and 723-743; these read WIIP…LLLF, WTFL…YLSI, IDPL…LVLI, FAYM…SNLI, VYFF…FWFT, GDFG…SFEF, VNFL…IAKS, TPIS…FLVA, LLPL…IGII, LGYM…FHLI, ALLF…VGYS, TAFL…CFWS, LLFS…TAFY, ILFP…IGIP, FSVS…KPFY, and YLFL…FFYF.

The protein belongs to the complex I subunit 5 family. NDH is composed of at least 16 different subunits, 5 of which are encoded in the nucleus.

Its subcellular location is the plastid. It localises to the chloroplast thylakoid membrane. The catalysed reaction is a plastoquinone + NADH + (n+1) H(+)(in) = a plastoquinol + NAD(+) + n H(+)(out). The enzyme catalyses a plastoquinone + NADPH + (n+1) H(+)(in) = a plastoquinol + NADP(+) + n H(+)(out). NDH shuttles electrons from NAD(P)H:plastoquinone, via FMN and iron-sulfur (Fe-S) centers, to quinones in the photosynthetic chain and possibly in a chloroplast respiratory chain. The immediate electron acceptor for the enzyme in this species is believed to be plastoquinone. Couples the redox reaction to proton translocation, and thus conserves the redox energy in a proton gradient. This is NAD(P)H-quinone oxidoreductase subunit 5, chloroplastic (ndhF) from Barbarea verna (Land cress).